The sequence spans 112 residues: Putative pterin-4-alpha-carbinolamine dehydratase (112 aa).

This sequence belongs to the pterin-4-alpha-carbinolamine dehydratase family.

It carries out the reaction (4aS,6R)-4a-hydroxy-L-erythro-5,6,7,8-tetrahydrobiopterin = (6R)-L-erythro-6,7-dihydrobiopterin + H2O. This Vibrio parahaemolyticus serotype O3:K6 (strain RIMD 2210633) protein is Putative pterin-4-alpha-carbinolamine dehydratase.